Consider the following 37-residue polypeptide: Ice-structuring protein 3 (37 aa).

This sequence belongs to the type-I AFP family.

Its function is as follows. Contributes to protect fish blood from freezing at subzero sea water temperatures. Lowers the blood freezing point. Binds to nascent ice crystals and prevents further growth. This is Ice-structuring protein 3 from Pseudopleuronectes americanus (Winter flounder).